A 717-amino-acid chain; its full sequence is Segment polarity protein dishevelled homolog DVL-3 (717 aa).

Residues 1–82 (MGETKVIYHL…RVVCWLVSAD (82 aa)) enclose the DIX domain. Residues 89–235 (GSVCADIQSD…PQIERSSSFS (147 aa)) are disordered. Polar residues predominate over residues 118–127 (HPNTRGSQEN). Basic and acidic residues predominate over residues 140 to 155 (ARRERPGRKETSEHAT). Residues 173–189 (ESSSTLMSSELDSTSFF) are compositionally biased toward low complexity. Polar residues predominate over residues 199-210 (RFSNSTEQSSAS). Basic residues predominate over residues 212-224 (LMRRHKRRRRKPK). In terms of domain architecture, PDZ spans 248-333 (TVTLNMEKYN…KPGPITLTVA (86 aa)). In terms of domain architecture, DEP spans 421–495 (SESGLEVRDR…SEQCYYIFGD (75 aa)). The segment at 552 to 653 (PDPAYIYGGG…THQSFGPPGI (102 aa)) is disordered. The segment covering 564–579 (GSQHSEGSRSSGSNRS) has biased composition (low complexity). Composition is skewed to basic and acidic residues over residues 580 to 593 (STEKRKDRETKGGD) and 602 to 618 (ESDHTTRSSLRRDRAAS). A compositionally biased stretch (basic residues) spans 629 to 645 (HRSHHSIAHSIRSHHTH).

This sequence belongs to the DSH family. In terms of tissue distribution, expressed throughout the epidermis.

It localises to the cytoplasm. Its function is as follows. Involved in the signal transduction pathway mediated by multiple Wnt genes. Required during ciliogenesis for the docking of basal bodies to the apical plasma membrane. In Xenopus laevis (African clawed frog), this protein is Segment polarity protein dishevelled homolog DVL-3.